The chain runs to 567 residues: Probable transport protein (567 aa).

Residues 1–30 (MSDRVEVNERRSDSVSEKEPARDDARKDVT) show a composition bias toward basic and acidic residues. A disordered region spans residues 1-38 (MSDRVEVNERRSDSVSEKEPARDDARKDVTDDQEDAPP). At 1-46 (MSDRVEVNERRSDSVSEKEPARDDARKDVTDDQEDAPPFMTANNAR) the chain is on the cytoplasmic side. Residues 47–67 (VMLVQAIGGSLNGYSIGFVGV) traverse the membrane as a helical segment. Residues 68 to 160 (YSTLFGYSTN…PSGYSSSESG (93 aa)) are Extracellular-facing. A helical membrane pass occupies residues 161-181 (IFAGSMIAGCLIGSVFAGPLA). Topologically, residues 182–189 (SKIGARLS) are cytoplasmic. The helical transmembrane segment at 190 to 210 (FLLVGLVGVVASVMYHASCAA) threads the bilayer. At 211–212 (DE) the chain is on the extracellular side. Residues 213–233 (FWVLIVGRFVIGLFLGVICVA) traverse the membrane as a helical segment. The Cytoplasmic portion of the chain corresponds to 234–249 (CPVYTDQNAHPKWKRT). The helical transmembrane segment at 250–270 (IGVMFQVFTTLGIFVAALMGL) threads the bilayer. Residues 271-289 (ALGQSIRFDHDGDQKVMAR) are Extracellular-facing. A helical membrane pass occupies residues 290-310 (MQGLCVFSTLFSLLTVVLGIV). At 311-341 (TRESRAKFDGGEEGRAELNPSEYGYVEMIPR) the chain is on the cytoplasmic side. Residues 342–362 (LLMGCVMAGTLQLTGINAVMN) form a helical membrane-spanning segment. Topologically, residues 363–366 (YAPT) are extracellular. Residues 367–387 (IMGSLGLAPLVGNFVVMLWNF) traverse the membrane as a helical segment. The Cytoplasmic segment spans residues 388-404 (VTTLASIPLSYVFTMRH). The chain crosses the membrane as a helical span at residues 405–425 (VFLFGSIFTSCMCLFMCGIPV). The Extracellular segment spans residues 426–437 (YPGVSKKLEAKN). The helical transmembrane segment at 438-458 (GVAITGILLFILGFEVCVGPC) threads the bilayer. At 459–480 (YYVLTQDMFPPSFRPRGASFTQ) the chain is on the cytoplasmic side. The chain crosses the membrane as a helical span at residues 481–501 (VAQFIFNLIINVCYPIATESI). At 502-514 (SGGPSGNQDKGQA) the chain is on the extracellular side. Residues 515 to 535 (VAFIFFGGLGLICFVIQVFFL) form a helical membrane-spanning segment. Residues 536–567 (HPWDEERDGKKVVAPAIGKKELSEESIGNRAE) lie on the Cytoplasmic side of the membrane.

The protein belongs to the major facilitator superfamily. Sugar transporter (TC 2.A.1.1) family.

It localises to the membrane. Its function is as follows. Probable membrane transport protein. This chain is Probable transport protein (PRO-1), found in Leishmania enriettii.